A 392-amino-acid polypeptide reads, in one-letter code: Galactokinase (392 aa).

The alpha-D-galactose site is built by Arg37, Glu43, His44, and Asp46. Residues Gly136, Gly138, Ser140, and Ser141 each coordinate ATP. Asp186 is a binding site for alpha-D-galactose. The active-site Proton acceptor is the Asp186. Phosphoserine is present on Ser230. Tyr236 contacts alpha-D-galactose.

Belongs to the GHMP kinase family. GalK subfamily. As to quaternary structure, homodimer.

It carries out the reaction alpha-D-galactose + ATP = alpha-D-galactose 1-phosphate + ADP + H(+). Its pathway is carbohydrate metabolism; galactose metabolism. Catalyzes the transfer of a phosphate from ATP to alpha-D-galactose and participates in the first committed step in the catabolism of galactose. The protein is Galactokinase (GALK1) of Canis lupus familiaris (Dog).